The following is a 260-amino-acid chain: Transcription repressor OFP13 (260 aa).

One can recognise an OVATE domain in the interval Val150–Gly211.

Expressed in roots, rosette and cauline leaves, shoots, stems, flower buds and siliques.

It localises to the nucleus. In terms of biological role, transcriptional repressor that regulates multiple aspects of plant growth and development through the regulation of BEL1-LIKE (BLH) and KNOX TALE (KNAT) homeodomain transcription factors. The sequence is that of Transcription repressor OFP13 (OFP13) from Arabidopsis thaliana (Mouse-ear cress).